The chain runs to 483 residues: Protein nucleotidyltransferase YdiU (483 aa).

Residues G87, G89, R90, K110, D122, G123, R173, and R180 each contribute to the ATP site. D249 (proton acceptor) is an active-site residue. 2 residues coordinate Mg(2+): N250 and D259. D259 serves as a coordination point for ATP.

The protein belongs to the SELO family. Mg(2+) serves as cofactor. Mn(2+) is required as a cofactor.

It carries out the reaction L-seryl-[protein] + ATP = 3-O-(5'-adenylyl)-L-seryl-[protein] + diphosphate. It catalyses the reaction L-threonyl-[protein] + ATP = 3-O-(5'-adenylyl)-L-threonyl-[protein] + diphosphate. The catalysed reaction is L-tyrosyl-[protein] + ATP = O-(5'-adenylyl)-L-tyrosyl-[protein] + diphosphate. The enzyme catalyses L-histidyl-[protein] + UTP = N(tele)-(5'-uridylyl)-L-histidyl-[protein] + diphosphate. It carries out the reaction L-seryl-[protein] + UTP = O-(5'-uridylyl)-L-seryl-[protein] + diphosphate. It catalyses the reaction L-tyrosyl-[protein] + UTP = O-(5'-uridylyl)-L-tyrosyl-[protein] + diphosphate. Functionally, nucleotidyltransferase involved in the post-translational modification of proteins. It can catalyze the addition of adenosine monophosphate (AMP) or uridine monophosphate (UMP) to a protein, resulting in modifications known as AMPylation and UMPylation. The sequence is that of Protein nucleotidyltransferase YdiU from Pelagibacter ubique (strain HTCC1062).